Consider the following 659-residue polypeptide: Homeobox protein slou (659 aa).

The segment covering 1–21 (MVMLQSPAQKASDSASAQNTA) has biased composition (polar residues). Disordered stretches follow at residues 1–63 (MVML…PAAK), 94–152 (MSSE…SFSS), 198–298 (AQQH…AAPS), 316–349 (TQAS…PSGR), 376–440 (QIAA…DRDA), and 455–548 (PNKF…PRRA). 3 stretches are compositionally biased toward low complexity: residues 27-51 (SPNS…SVVS), 95-108 (SSES…LSPL), and 120-135 (HNNN…NSNT). Over residues 136–152 (RRSQSPPASVGSVSFSS) the composition is skewed to polar residues. The segment covering 201-232 (HMHHHQHQHHQHPAHPHSHQHPHPHPHPHPHP) has biased composition (basic residues). 7 tandem repeats follow at residues 221–222 (HP), 223–224 (HP), 225–226 (HP), 227–228 (HP), 229–230 (HP), 231–232 (HP), and 233–234 (HP). A 7 X 2 AA tandem repeats of H-P region spans residues 221-234 (HPHPHPHPHPHPHP). Pro residues-rich tracts occupy residues 250–263 (PPSP…PPTS) and 275–286 (PIAPPQNPPHSS). 2 stretches are compositionally biased toward low complexity: residues 287-298 (QPPQQQQVAAPS) and 316-347 (TQAS…GSPS). Acidic residues predominate over residues 388–401 (SEELNVDGNDEDSN). The segment covering 417–435 (RSVNSSAAANPSSASTSAS) has biased composition (low complexity). Acidic residues-rich tracts occupy residues 478–492 (RDEE…DQSE) and 500–519 (NDMD…DPSS). A compositionally biased stretch (gly residues) spans 528-543 (SRNGDGKSGGGGGGGS). The segment at residues 545 to 604 (PRRARTAFTYEQLVSLENKFKTTRYLSVCERLNLALSLSLTETQVKIWFQNRRTKWKKQN) is a DNA-binding region (homeobox).

Belongs to the NK-1 homeobox family. In terms of tissue distribution, mesodermal precursor cells of distinct muscles during embryogenesis, a subset of neuronal cells of the CNS and their precursors and also in cells of a small region of the midgut.

It is found in the nucleus. Functionally, may play a role in specifying the identity of particular somatic muscles and neurons of the CNS. This Drosophila melanogaster (Fruit fly) protein is Homeobox protein slou (slou).